The primary structure comprises 504 residues: Histidine ammonia-lyase (504 aa).

Residues 141 to 143 (ASG) constitute a cross-link (5-imidazolinone (Ala-Gly)). Ser-142 carries the post-translational modification 2,3-didehydroalanine (Ser).

The protein belongs to the PAL/histidase family. In terms of processing, contains an active site 4-methylidene-imidazol-5-one (MIO), which is formed autocatalytically by cyclization and dehydration of residues Ala-Ser-Gly.

The protein resides in the cytoplasm. It carries out the reaction L-histidine = trans-urocanate + NH4(+). The protein operates within amino-acid degradation; L-histidine degradation into L-glutamate; N-formimidoyl-L-glutamate from L-histidine: step 1/3. The polypeptide is Histidine ammonia-lyase (Geobacillus thermodenitrificans (strain NG80-2)).